We begin with the raw amino-acid sequence, 396 residues long: S-adenosylmethionine synthase (396 aa).

His-16 is a binding site for ATP. Asp-18 lines the Mg(2+) pocket. Glu-44 lines the K(+) pocket. Residues Glu-57 and Gln-100 each contribute to the L-methionine site. Positions 100–110 (QSPDINQGVDR) are flexible loop. ATP-binding positions include 165-167 (DAK), Asp-240, 246-247 (RK), Ala-263, and Lys-267. Asp-240 is a binding site for L-methionine. Lys-271 provides a ligand contact to L-methionine.

The protein belongs to the AdoMet synthase family. As to quaternary structure, homotetramer; dimer of dimers. Mg(2+) serves as cofactor. The cofactor is K(+).

Its subcellular location is the cytoplasm. The catalysed reaction is L-methionine + ATP + H2O = S-adenosyl-L-methionine + phosphate + diphosphate. The protein operates within amino-acid biosynthesis; S-adenosyl-L-methionine biosynthesis; S-adenosyl-L-methionine from L-methionine: step 1/1. Its function is as follows. Catalyzes the formation of S-adenosylmethionine (AdoMet) from methionine and ATP. The overall synthetic reaction is composed of two sequential steps, AdoMet formation and the subsequent tripolyphosphate hydrolysis which occurs prior to release of AdoMet from the enzyme. This is S-adenosylmethionine synthase from Pseudomonas fluorescens (strain SBW25).